Here is a 57-residue protein sequence, read N- to C-terminus: Small ribosomal subunit protein eS31 (57 aa).

The Zn(2+) site is built by Cys-29, Cys-32, Cys-47, and Cys-50. The C4-type zinc finger occupies 29-50 (CPRCGPGVFMANHKDRWSCGRC).

It belongs to the eukaryotic ribosomal protein eS31 family. In terms of assembly, part of the 30S ribosomal subunit. Zn(2+) serves as cofactor.

This chain is Small ribosomal subunit protein eS31, found in Thermococcus kodakarensis (strain ATCC BAA-918 / JCM 12380 / KOD1) (Pyrococcus kodakaraensis (strain KOD1)).